The chain runs to 368 residues: Agmatine deiminase (368 aa).

Cysteine 357 acts as the Amidino-cysteine intermediate in catalysis.

This sequence belongs to the agmatine deiminase family. Homodimer.

It catalyses the reaction agmatine + H2O = N-carbamoylputrescine + NH4(+). It functions in the pathway amine and polyamine biosynthesis; putrescine biosynthesis via agmatine pathway; N-carbamoylputrescine from agmatine: step 1/1. Its function is as follows. Mediates the hydrolysis of agmatine into N-carbamoylputrescine in the arginine decarboxylase (ADC) pathway of putrescine biosynthesis, a basic polyamine. The protein is Agmatine deiminase of Pseudomonas syringae pv. syringae (strain B728a).